The chain runs to 138 residues: Sporulation-specific cell division protein SsgB (138 aa).

This sequence belongs to the SsgA family. In terms of assembly, monomer. Interacts with SsgA. Interacts with FtsZ (via N-terminus).

Its subcellular location is the cell septum. Its function is as follows. Involved in sporulation-specific cell division. Required for early stages of sporulation. Important in the process of growth cessation prior to sporulation-specific cell division. Recruits cell division protein FtsZ to the future septum sites and tethers the contractile ring structure (Z ring) to the cytoplasmic membrane during sporulation. Stimulates polymerization and filament length of FtsZ in vitro. In Thermobifida fusca (strain YX), this protein is Sporulation-specific cell division protein SsgB.